Reading from the N-terminus, the 253-residue chain is Imidazole glycerol phosphate synthase subunit HisF (253 aa).

Residues Asp-11 and Asp-130 contribute to the active site.

This sequence belongs to the HisA/HisF family. As to quaternary structure, heterodimer of HisH and HisF.

Its subcellular location is the cytoplasm. It catalyses the reaction 5-[(5-phospho-1-deoxy-D-ribulos-1-ylimino)methylamino]-1-(5-phospho-beta-D-ribosyl)imidazole-4-carboxamide + L-glutamine = D-erythro-1-(imidazol-4-yl)glycerol 3-phosphate + 5-amino-1-(5-phospho-beta-D-ribosyl)imidazole-4-carboxamide + L-glutamate + H(+). It participates in amino-acid biosynthesis; L-histidine biosynthesis; L-histidine from 5-phospho-alpha-D-ribose 1-diphosphate: step 5/9. IGPS catalyzes the conversion of PRFAR and glutamine to IGP, AICAR and glutamate. The HisF subunit catalyzes the cyclization activity that produces IGP and AICAR from PRFAR using the ammonia provided by the HisH subunit. The chain is Imidazole glycerol phosphate synthase subunit HisF from Roseobacter denitrificans (strain ATCC 33942 / OCh 114) (Erythrobacter sp. (strain OCh 114)).